We begin with the raw amino-acid sequence, 310 residues long: Ribonuclease HIII (310 aa).

One can recognise an RNase H type-2 domain in the interval 90-306; it reads FQCIGSDEAG…RKKAENLVQK (217 aa). The a divalent metal cation site is built by D96, E97, and D201.

Belongs to the RNase HII family. RnhC subfamily. The cofactor is Mn(2+). It depends on Mg(2+) as a cofactor.

The protein localises to the cytoplasm. The enzyme catalyses Endonucleolytic cleavage to 5'-phosphomonoester.. In terms of biological role, endonuclease that specifically degrades the RNA of RNA-DNA hybrids. This Staphylococcus saprophyticus subsp. saprophyticus (strain ATCC 15305 / DSM 20229 / NCIMB 8711 / NCTC 7292 / S-41) protein is Ribonuclease HIII.